The following is a 201-amino-acid chain: 2-phospho-L-lactate guanylyltransferase (201 aa).

The protein belongs to the CofC family. In terms of assembly, homodimer.

The enzyme catalyses (2S)-2-phospholactate + GTP + H(+) = (2S)-lactyl-2-diphospho-5'-guanosine + diphosphate. The protein operates within cofactor biosynthesis; coenzyme F420 biosynthesis. Functionally, guanylyltransferase that catalyzes the activation of (2S)-2-phospholactate (2-PL) as (2S)-lactyl-2-diphospho-5'-guanosine, via the condensation of 2-PL with GTP. It is involved in the biosynthesis of coenzyme F420, a hydride carrier cofactor. The chain is 2-phospho-L-lactate guanylyltransferase from Natronomonas pharaonis (strain ATCC 35678 / DSM 2160 / CIP 103997 / JCM 8858 / NBRC 14720 / NCIMB 2260 / Gabara) (Halobacterium pharaonis).